A 199-amino-acid polypeptide reads, in one-letter code: Superoxide dismutase [Mn/Fe] (199 aa).

Positions 27, 81, 161, and 165 each coordinate Fe(3+). The Mn(2+) site is built by histidine 27, histidine 81, aspartate 161, and histidine 165.

This sequence belongs to the iron/manganese superoxide dismutase family. In terms of assembly, homodimer. Mn(2+) is required as a cofactor. It depends on Fe(3+) as a cofactor.

It catalyses the reaction 2 superoxide + 2 H(+) = H2O2 + O2. Destroys superoxide anion radicals which are normally produced within the cells and which are toxic to biological systems. Catalyzes the dismutation of superoxide anion radicals into O2 and H2O2 by successive reduction and oxidation of the transition metal ion at the active site. This is Superoxide dismutase [Mn/Fe] (sodA) from Staphylococcus haemolyticus (strain JCSC1435).